We begin with the raw amino-acid sequence, 162 residues long: Ribonuclease H (162 aa).

The RNase H type-1 domain occupies 6-154; the sequence is DMKRVEIFTD…ADRLANQGVE (149 aa). Residues aspartate 15, glutamate 53, aspartate 82, and aspartate 146 each coordinate Mg(2+).

The protein belongs to the RNase H family. In terms of assembly, monomer. Mg(2+) serves as cofactor.

Its subcellular location is the cytoplasm. It carries out the reaction Endonucleolytic cleavage to 5'-phosphomonoester.. Functionally, endonuclease that specifically degrades the RNA of RNA-DNA hybrids. This Nitrosomonas eutropha (strain DSM 101675 / C91 / Nm57) protein is Ribonuclease H.